A 320-amino-acid chain; its full sequence is MGKAVKKKYSGASSGGKEVDAEKHLTTVFKFNTDLGQHILKNPLVAQGIVDKAQIKPSDIVLEIGPGTGNLTVRILEQARKVVAVEFDPRMAAELTKRVHGTPVEKKLEILLGDFMKTELPYFDVCISNTPYQISSPLVFKLINQPKPPRVSILMFQREFAMRLLARPGDSLYCRLSANVQMWANVTHIMKVGKNNFRPPPKVESSVVRIEIKNPRPQVDFNEWDGLLRIVFVRKNRTIAAGFKSTTVLEILEKNYKAFLATQSAVPTTSSGDSLINEVKEKIEQVLSETGLAEKRAGKCDQTDFLKLLYGFHQVGIHFA.

S-adenosyl-L-methionine-binding residues include His38, Leu40, Gly65, Glu86, Asp114, and Asn129.

It belongs to the class I-like SAM-binding methyltransferase superfamily. rRNA adenine N(6)-methyltransferase family.

It catalyses the reaction adenosine(1779)/adenosine(1780) in 18S rRNA + 4 S-adenosyl-L-methionine = N(6)-dimethyladenosine(1779)/N(6)-dimethyladenosine(1780) in 18S rRNA + 4 S-adenosyl-L-homocysteine + 4 H(+). In terms of biological role, specifically dimethylates two adjacent adenosines in the loop of a conserved hairpin near the 3'-end of 18S rRNA in the 40S particle. In Kluyveromyces lactis (strain ATCC 8585 / CBS 2359 / DSM 70799 / NBRC 1267 / NRRL Y-1140 / WM37) (Yeast), this protein is Dimethyladenosine transferase (DIM1).